Consider the following 130-residue polypeptide: Small ribosomal subunit protein uS9 (130 aa).

Residues 105-115 (TRDSRQVERKK) are compositionally biased toward basic and acidic residues. Positions 105-130 (TRDSRQVERKKVGFRKSRKRTQFSKR) are disordered. Residues 116–130 (VGFRKSRKRTQFSKR) are compositionally biased toward basic residues.

It belongs to the universal ribosomal protein uS9 family.

The protein is Small ribosomal subunit protein uS9 of Buchnera aphidicola subsp. Schizaphis graminum (strain Sg).